Reading from the N-terminus, the 180-residue chain is ATP-dependent protease subunit HslV (180 aa).

Residue T5 is part of the active site. Na(+) contacts are provided by G165, C168, and T171.

The protein belongs to the peptidase T1B family. HslV subfamily. As to quaternary structure, a double ring-shaped homohexamer of HslV is capped on each side by a ring-shaped HslU homohexamer. The assembly of the HslU/HslV complex is dependent on binding of ATP.

Its subcellular location is the cytoplasm. The catalysed reaction is ATP-dependent cleavage of peptide bonds with broad specificity.. Allosterically activated by HslU binding. In terms of biological role, protease subunit of a proteasome-like degradation complex believed to be a general protein degrading machinery. This Helicobacter acinonychis (strain Sheeba) protein is ATP-dependent protease subunit HslV.